The sequence spans 111 residues: MISTFALFWALCIVCIINMARYYSSLRVLLMILRDCDPLLYQYVDGGGFFTSHGQPSKQIRLVGYIYAQRYLDHHDPEFIRRCERVRGQFLLTTALCGLIVISLIAMMMWY.

The next 2 membrane-spanning stretches (helical) occupy residues 1 to 21 (MIST…NMAR) and 90 to 110 (FLLT…MMMW).

The protein belongs to the universal stress protein B family.

It localises to the cell inner membrane. The protein is Universal stress protein B of Pectobacterium atrosepticum (strain SCRI 1043 / ATCC BAA-672) (Erwinia carotovora subsp. atroseptica).